Consider the following 1171-residue polypeptide: ATP-dependent helicase/deoxyribonuclease subunit B (1171 aa).

Residues 1–390 enclose the UvrD-like helicase ATP-binding domain; that stretch reads MSLRFVIGRA…HPLVECIRSA (390 aa). 8-15 contributes to the ATP binding site; sequence GRAGSGKS. The UvrD-like helicase C-terminal domain maps to 281–587; it reads MEQPRFHSPA…QFANIPPSLD (307 aa). The [4Fe-4S] cluster site is built by Cys-805, Cys-1129, Cys-1132, and Cys-1138.

This sequence belongs to the helicase family. AddB/RexB type 1 subfamily. In terms of assembly, heterodimer of AddA and AddB. The cofactor is Mg(2+). [4Fe-4S] cluster is required as a cofactor.

In terms of biological role, the heterodimer acts as both an ATP-dependent DNA helicase and an ATP-dependent, dual-direction single-stranded exonuclease. Recognizes the chi site generating a DNA molecule suitable for the initiation of homologous recombination. The AddB subunit has 5' -&gt; 3' nuclease activity but not helicase activity. In Bacillus cereus (strain ATCC 14579 / DSM 31 / CCUG 7414 / JCM 2152 / NBRC 15305 / NCIMB 9373 / NCTC 2599 / NRRL B-3711), this protein is ATP-dependent helicase/deoxyribonuclease subunit B.